A 340-amino-acid polypeptide reads, in one-letter code: MKILFWGTPAYAVPTLDTLHEAGHQIVGVVTQPDRRRGRGKQLMPSPVKARAQELGCPVFTPERIRRDLDCQQQLNALDADVSVVVAFGQILPKDILQHPPLGCWNGHGSLLPRWRGAGPIQWSILEGDPETGVGIMAMEEGLDTGPVLLEQRLSINLLENAHQLGERLSRLSADLMLQAMPVIEAAGPGLEAERWSRLQVRHQPEEGTYARMLSKEDFQLNWGDSALTIHRKVMGLYPGAVTVWKDRRLKVLATEPLIERLADDLSDEARALVGRWNTGAHPPGQVLHSADSGLVVSTHGCPILIREAQLEGKARSHGQALIQQLQAQPGDSLGLAAKP.

Residue 110–113 (SLLP) participates in (6S)-5,6,7,8-tetrahydrofolate binding.

The protein belongs to the Fmt family.

It carries out the reaction L-methionyl-tRNA(fMet) + (6R)-10-formyltetrahydrofolate = N-formyl-L-methionyl-tRNA(fMet) + (6S)-5,6,7,8-tetrahydrofolate + H(+). Its function is as follows. Attaches a formyl group to the free amino group of methionyl-tRNA(fMet). The formyl group appears to play a dual role in the initiator identity of N-formylmethionyl-tRNA by promoting its recognition by IF2 and preventing the misappropriation of this tRNA by the elongation apparatus. The chain is Methionyl-tRNA formyltransferase from Synechococcus sp. (strain WH7803).